The following is a 393-amino-acid chain: G protein-activated inward rectifier potassium channel 3 (393 aa).

The disordered stretch occupies residues 1–23; sequence MAQENAAFSPGSEEPPRRRGRQR. Over 1–57 the chain is Cytoplasmic; the sequence is MAQENAAFSPGSEEPPRRRGRQRYVEKDGRCNVQQGNVRETYRYLTDLFTTLVDLQW. The chain crosses the membrane as a helical span at residues 58-82; that stretch reads RLSLLFFVLAYALTWLFFGAIWWLI. Residues 83 to 106 are Extracellular-facing; it reads AYGRGDLEHLEDTAWTPCVNNLNG. Residues 107–118 constitute an intramembrane region (helical; Pore-forming); that stretch reads FVAAFLFSIETE. Positions 119 to 125 form an intramembrane region, pore-forming; it reads TTIGYGH. A Selectivity filter motif is present at residues 120–125; it reads TIGYGH. At 126 to 134 the chain is on the extracellular side; the sequence is RVITDQCPE. A helical transmembrane segment spans residues 135 to 156; sequence GIVLLLLQAILGSMVNAFMVGC. The Cytoplasmic segment spans residues 157 to 393; it reads MFVKISQPNK…LPPPESESKV (237 aa). The tract at residues 360-393 is disordered; sequence KVEEEGAGEGAGAGDGADKEHNGCLPPPESESKV. A compositionally biased stretch (pro residues) spans 384-393; sequence LPPPESESKV. Residues 390–393 carry the PDZ-binding motif; that stretch reads ESKV.

It belongs to the inward rectifier-type potassium channel (TC 1.A.2.1) family. KCNJ9 subfamily. In terms of assembly, associates with KCNJ3/GIRK1 to form a G-protein-activated heteromultimer pore-forming unit. Interacts (via PDZ-binding motif) with SNX27 (via PDZ domain); the interaction is required when endocytosed to prevent degradation in lysosomes and promote recycling to the plasma membrane. As to expression, expressed mainly in the brain, some expression in the skeletal muscle.

It localises to the membrane. It catalyses the reaction K(+)(in) = K(+)(out). Functionally, inward rectifier potassium channels are characterized by a greater tendency to allow potassium to flow into the cell rather than out of it. Their voltage dependence is regulated by the concentration of extracellular potassium; as external potassium is raised, the voltage range of the channel opening shifts to more positive voltages. The inward rectification is mainly due to the blockage of outward current by internal magnesium. This receptor is controlled by G proteins. Unable to produce channel activity when expressed alone. Forms a functional channel in association with KCNJ3/GIRK1. The sequence is that of G protein-activated inward rectifier potassium channel 3 (Kcnj9) from Mus musculus (Mouse).